The following is a 57-amino-acid chain: Large ribosomal subunit protein bL32c (57 aa).

This sequence belongs to the bacterial ribosomal protein bL32 family.

It is found in the plastid. Its subcellular location is the chloroplast. The polypeptide is Large ribosomal subunit protein bL32c (Vitis vinifera (Grape)).